Here is a 347-residue protein sequence, read N- to C-terminus: MQIKQNISLKPYHTFAIEQCSHYLVEVGSVDELVDIYANPDFRELPKLILGSGSNVLFTQPFSGVVVVNRLSGKTLSEDESFYYIHAEGGEDWPNLVEWCVQQGIGGLENLALIPGCAGSAPIQNIGAYGVEFKDVCQYVDILMLDDFSQRRLSAEECQFGYRDSVFKHALYNQCVVIAVGLKLPKTWQANNSYGPLQEIAEHELSPMSIFHKVCEVRREKLPDPKQIGNAGSFFKNPIIDKAHWQQLKAQFPNIVAYPAGEQMKVAAGWLIDQCDFKGVQVGGAQVHPKQALVLTNAQSCTAQDIIQLASLICDAVWDKYQIALEHEVRFISAVGETCLSELRVES.

Residues 16–187 enclose the FAD-binding PCMH-type domain; the sequence is AIEQCSHYLV…IAVGLKLPKT (172 aa). Residue R163 is part of the active site. Residue S233 is the Proton donor of the active site. E328 is a catalytic residue.

Belongs to the MurB family. FAD is required as a cofactor.

It localises to the cytoplasm. It carries out the reaction UDP-N-acetyl-alpha-D-muramate + NADP(+) = UDP-N-acetyl-3-O-(1-carboxyvinyl)-alpha-D-glucosamine + NADPH + H(+). The protein operates within cell wall biogenesis; peptidoglycan biosynthesis. Its function is as follows. Cell wall formation. In Vibrio vulnificus (strain YJ016), this protein is UDP-N-acetylenolpyruvoylglucosamine reductase.